Here is a 942-residue protein sequence, read N- to C-terminus: Glutamyl aminopeptidase (942 aa).

Topologically, residues 1-14 (MSTDSKRYCIKTKH) are cytoplasmic. The helical; Signal-anchor for type II membrane protein transmembrane segment at 15 to 35 (VAIICAAVVAVGLIVGLSVGL) threads the bilayer. The Extracellular portion of the chain corresponds to 36–942 (TRSCDSKDGG…RDTIRDWFFN (907 aa)). A disordered region spans residues 40-74 (DSKDGGQGTTQSPSHLPPTSSPPQDQGVCPASEDE). Asparagine 110, asparagine 114, and asparagine 187 each carry an N-linked (GlcNAc...) asparagine glycan. Residue glutamate 213 coordinates substrate. Asparagine 314 carries N-linked (GlcNAc...) asparagine glycosylation. 347 to 351 (GAMEN) contributes to the substrate binding site. Residue asparagine 367 is glycosylated (N-linked (GlcNAc...) asparagine). Histidine 383 provides a ligand contact to Zn(2+). Catalysis depends on glutamate 384, which acts as the Proton acceptor. Residues histidine 387 and glutamate 406 each contribute to the Zn(2+) site. N-linked (GlcNAc...) asparagine glycosylation is found at asparagine 557, asparagine 579, asparagine 587, asparagine 597, asparagine 632, asparagine 668, asparagine 753, asparagine 786, and asparagine 791. Arginine 877 contacts substrate.

This sequence belongs to the peptidase M1 family. In terms of assembly, homodimer; disulfide-linked. Requires Zn(2+) as cofactor.

Its subcellular location is the cell membrane. It carries out the reaction Release of N-terminal glutamate (and to a lesser extent aspartate) from a peptide.. Its activity is regulated as follows. Substrate specificity is modulated by calcium which enhances the enzymatic activity for cleavage of acidic residues while reducing its activity with basic residues. Inhibited by aminopeptidase inhibitors amastatin and bestatin. Regulates central hypertension through its calcium-modulated preference to cleave N-terminal acidic residues from peptides such as angiotensin II. This is Glutamyl aminopeptidase (ENPEP) from Sus scrofa (Pig).